A 116-amino-acid polypeptide reads, in one-letter code: NADPH-dependent 7-cyano-7-deazaguanine reductase (116 aa).

Cys-31 (thioimide intermediate) is an active-site residue. Asp-38 (proton donor) is an active-site residue. Substrate contacts are provided by residues Val-53 to Leu-55 and Tyr-72 to Glu-73.

It belongs to the GTP cyclohydrolase I family. QueF type 1 subfamily.

The protein localises to the cytoplasm. It catalyses the reaction 7-aminomethyl-7-carbaguanine + 2 NADP(+) = 7-cyano-7-deazaguanine + 2 NADPH + 3 H(+). It participates in tRNA modification; tRNA-queuosine biosynthesis. Its function is as follows. Catalyzes the NADPH-dependent reduction of 7-cyano-7-deazaguanine (preQ0) to 7-aminomethyl-7-deazaguanine (preQ1). This is NADPH-dependent 7-cyano-7-deazaguanine reductase from Chloroherpeton thalassium (strain ATCC 35110 / GB-78).